Consider the following 465-residue polypeptide: Ran-binding protein 3-like (465 aa).

Positions 276 to 417 (SQPSRKCLLE…ALQSFNKQRD (142 aa)) constitute a RanBD1 domain.

Interacts with SMAD1, SMAD5 and SMAD8; the interaction (with SMAD at least) increases when SMAD1 is not phosphorylated and mediates SMAD1 nuclear export.

It localises to the nucleus. The protein resides in the cytoplasm. In terms of biological role, nuclear export factor for BMP-specific SMAD1/5/8 that plays a critical role in terminating BMP signaling and regulating mesenchymal stem cell differentiation by blocking osteoblast differentiation to promote myogenic differention. Directly recognizes dephosphorylated SMAD1/5/8 and mediates their nuclear export in a Ran-dependent manner. In Homo sapiens (Human), this protein is Ran-binding protein 3-like (RANBP3L).